A 167-amino-acid polypeptide reads, in one-letter code: Endoribonuclease YbeY (167 aa).

His131, His135, and His141 together coordinate Zn(2+).

This sequence belongs to the endoribonuclease YbeY family. It depends on Zn(2+) as a cofactor.

It localises to the cytoplasm. In terms of biological role, single strand-specific metallo-endoribonuclease involved in late-stage 70S ribosome quality control and in maturation of the 3' terminus of the 16S rRNA. This chain is Endoribonuclease YbeY, found in Rickettsia felis (strain ATCC VR-1525 / URRWXCal2) (Rickettsia azadi).